A 429-amino-acid polypeptide reads, in one-letter code: Enolase (429 aa).

A (2R)-2-phosphoglycerate-binding site is contributed by Gln-163. The Proton donor role is filled by Glu-205. Residues Asp-242, Glu-287, and Asp-314 each contribute to the Mg(2+) site. Positions 339, 368, 369, and 390 each coordinate (2R)-2-phosphoglycerate. Residue Lys-339 is the Proton acceptor of the active site.

It belongs to the enolase family. Requires Mg(2+) as cofactor.

It is found in the cytoplasm. Its subcellular location is the secreted. The protein localises to the cell surface. The catalysed reaction is (2R)-2-phosphoglycerate = phosphoenolpyruvate + H2O. It functions in the pathway carbohydrate degradation; glycolysis; pyruvate from D-glyceraldehyde 3-phosphate: step 4/5. Functionally, catalyzes the reversible conversion of 2-phosphoglycerate (2-PG) into phosphoenolpyruvate (PEP). It is essential for the degradation of carbohydrates via glycolysis. This Anaeromyxobacter sp. (strain Fw109-5) protein is Enolase.